Consider the following 209-residue polypeptide: CASP-like protein 2A2 (209 aa).

The Cytoplasmic portion of the chain corresponds to 1–37 (MSKTAGVGRLGGARAADAAQQQQLAAGDAAVARAARP). The chain crosses the membrane as a helical span at residues 38 to 58 (IETLLRAAPLVLCVAAMTLML). The Extracellular portion of the chain corresponds to 59 to 79 (RDQQSNEYGTVAYSDLGGFKY). The chain crosses the membrane as a helical span at residues 80-100 (LVYANGLCAAYSLASAFYTAV). The Cytoplasmic segment spans residues 101–109 (PRPATVSRS). The chain crosses the membrane as a helical span at residues 110 to 130 (WVVFLLDQVFTYLILAAGAAA). Residues 131–161 (AELLYLAYNGDKEVTWSEACGVFGSFCRQAR) lie on the Extracellular side of the membrane. The chain crosses the membrane as a helical span at residues 162–182 (ISVAITFGAVLCFILLSLLSS). The Cytoplasmic portion of the chain corresponds to 183 to 209 (YRLFSAYEAPPPSALGSKGVEIAAYPR).

This sequence belongs to the Casparian strip membrane proteins (CASP) family. As to quaternary structure, homodimer and heterodimers.

The protein resides in the cell membrane. The protein is CASP-like protein 2A2 of Zea mays (Maize).